The following is a 434-amino-acid chain: E3 ubiquitin-protein ligase siah-1 (434 aa).

Positions 27-88 (FEEDENAGPE…NGNTPSVTIP (62 aa)) are disordered. Positions 43–55 (SSSSASSQRSSAS) are enriched in low complexity. The span at 74–88 (MSNNQNGNTPSVTIP) shows a compositional bias: polar residues. An RING-type; degenerate zinc finger spans residues 171-206 (CPVCLEYMLPPYMQCPSGHLVCSNCRPKLQCCPTCR). The SBD stretch occupies residues 220-415 (IANTVRFPCK…LGINVTISRI (196 aa)). The SIAH-type; degenerate zinc finger occupies 223-283 (TVRFPCKFSN…VMDHLKKVHK (61 aa)). Zn(2+) is bound by residues Cys228, Cys235, His247, Cys251, Cys258, Cys265, His277, and His282.

This sequence belongs to the SINA (Seven in absentia) family. As to quaternary structure, interacts with tir-1.

It carries out the reaction S-ubiquitinyl-[E2 ubiquitin-conjugating enzyme]-L-cysteine + [acceptor protein]-L-lysine = [E2 ubiquitin-conjugating enzyme]-L-cysteine + N(6)-ubiquitinyl-[acceptor protein]-L-lysine.. The protein operates within protein modification; protein ubiquitination. Functionally, E3 ubiquitin-protein ligase that mediates ubiquitination and subsequent proteasomal degradation of target proteins. E3 ubiquitin ligases accept ubiquitin from an E2 ubiquitin-conjugating enzyme in the form of a thioester and then directly transfers the ubiquitin to targeted substrates. It probably triggers the ubiquitin-mediated degradation of different substrates. This is E3 ubiquitin-protein ligase siah-1 from Caenorhabditis briggsae.